Reading from the N-terminus, the 439-residue chain is MSGASDFLSKGIDLVQKAIDADTATRYEEAYKLYYNGLDYLMLAIKYEKNPKSKELVKSKFTEYLTRAEQLKDHLEKQAQNKSTAESSVNGSTKAKKSNGDGNGSGDDNDDADTKKLRGALAGAILSEKPNVKWSDIAGLDAAKEALKEAVILPVKFPQLFVGNRKPTSGILLYGPPGTGKSYLAKAVATEANSTFFSVSSSDLVSKWMGESERLVKQLFTMARENKPSIIFIDEVDALCGPRGEGESEASRRIKTELLVQMNGVGNDSQGVLVLGATNIPWQLDAAVRRRFERRIYIALPDVEARTRMFEINIGDVPCECTPHDYRTLAEMTDGYSGHDVAVVVRDALMQPIRKIQQATHFKPVIDETDGKEKLTPCSPGDEGAREMNWMDLATDELKEPPLTIKDFIKAIKNNRPTVNEADIAQHVKFTEDFGQEGN.

Positions 8–75 (LSKGIDLVQK…TRAEQLKDHL (68 aa)) constitute an MIT domain. The segment at 76–113 (EKQAQNKSTAESSVNGSTKAKKSNGDGNGSGDDNDDAD) is disordered. A compositionally biased stretch (polar residues) spans 80 to 93 (QNKSTAESSVNGST). 175-182 (GPPGTGKS) lines the ATP pocket.

It belongs to the AAA ATPase family. As to quaternary structure, monomer or homodimer (in nucleotide-free form). Decamer, dodecamer or tetradecamer of two stacked respective homooligomeric rings (when bound to ATP); the dodecameric form seems to be predominant.

It localises to the endosome membrane. In terms of biological role, pre-vacuolar protein sorting protein involved in the transport of biosynthetic membrane proteins from the prevacuolar/endosomal compartment to the vacuole. Required for multivesicular body (MVB) protein sorting. Catalyzes the ATP-dependent dissociation of class E VPS proteins from endosomal membranes, such as the disassembly of the ESCRT-III complex. Required for extracellular secretion of the secreted aspartyl proteases SAP2, SAP4, SAP5, and SAP6. Its regulation of the pre-vacuolar secretory pathway is critical for virulence. This Candida albicans (strain SC5314 / ATCC MYA-2876) (Yeast) protein is Vacuolar protein sorting-associated protein 4.